The following is a 72-amino-acid chain: Brevinin-2GHb (72 aa).

The N-terminal stretch at 1–22 (MFTMKKSLLLLFFLGTVSLSLC) is a signal peptide. Positions 23-42 (EQERGADEDDGGEMTEELKR) are excised as a propeptide. A disulfide bond links Cys-66 and Cys-72.

As to expression, expressed by the skin glands.

Its subcellular location is the secreted. Antimicrobial peptide. Active against the Gram-positive bacteria S.aureus FDA209P (MIC=16.5 ug/ml) and B.subtilis ATCC 6633 (MIC&gt;64 ug/ml), and the Gram-negative bacteria E.coli O111 (MIC=8.2 ug/ml) and E.coli ATCC 25922 (MIC=8.2 ug/ml). Not active against the fungus C.albicans. In Sylvirana guentheri (Gunther's frog), this protein is Brevinin-2GHb.